A 249-amino-acid chain; its full sequence is Urease accessory protein UreG (249 aa).

Residues 1–13 show a composition bias toward basic and acidic residues; that stretch reads MHLGHEEFQRTDG. Positions 1 to 34 are disordered; the sequence is MHLGHEEFQRTDGRASTGPADAGPAGAGRAPRIG. Positions 18–33 are enriched in low complexity; sequence GPADAGPAGAGRAPRI. 37–44 contributes to the GTP binding site; that stretch reads GPVGSGKT. The tract at residues 229-249 is disordered; it reads PRGGSYDASDASNASQPLNRM. Over residues 238–249 the composition is skewed to polar residues; sequence DASNASQPLNRM.

Belongs to the SIMIBI class G3E GTPase family. UreG subfamily. In terms of assembly, homodimer. UreD, UreF and UreG form a complex that acts as a GTP-hydrolysis-dependent molecular chaperone, activating the urease apoprotein by helping to assemble the nickel containing metallocenter of UreC. The UreE protein probably delivers the nickel.

It is found in the cytoplasm. Facilitates the functional incorporation of the urease nickel metallocenter. This process requires GTP hydrolysis, probably effectuated by UreG. The sequence is that of Urease accessory protein UreG from Frankia casuarinae (strain DSM 45818 / CECT 9043 / HFP020203 / CcI3).